We begin with the raw amino-acid sequence, 91 residues long: Probable Fe(2+)-trafficking protein (91 aa).

Belongs to the Fe(2+)-trafficking protein family.

In terms of biological role, could be a mediator in iron transactions between iron acquisition and iron-requiring processes, such as synthesis and/or repair of Fe-S clusters in biosynthetic enzymes. The polypeptide is Probable Fe(2+)-trafficking protein (Burkholderia mallei (strain NCTC 10247)).